The sequence spans 337 residues: P2Y purinoceptor 14 (337 aa).

Over 1–28 (MNATSVPPAEGSCPSNALITKQIIPMLY) the chain is Extracellular. An N-linked (GlcNAc...) asparagine glycan is attached at asparagine 2. Residues 29–49 (FVVFVAGILLNGMSGWVFFYV) form a helical membrane-spanning segment. Residues 50–54 (PSSKS) are Cytoplasmic-facing. Residues 55–75 (FIVYLKNIVIADFLMSLTFPF) traverse the membrane as a helical segment. Over 76–95 (KILGDLGLGLWQVKVFVCRV) the chain is Extracellular. A disulfide bridge connects residues cysteine 93 and cysteine 171. The helical transmembrane segment at 96–116 (SAVLFYINMYVSIVFFGLIGF) threads the bilayer. At 117-138 (DRYYKIVKPLLTSFIQSISYSK) the chain is on the cytoplasmic side. Residues 139 to 159 (LLSVLVWSLTLLIALPNMILT) form a helical membrane-spanning segment. Topologically, residues 160 to 187 (NRNVTEATRVKCMDLKSDLGLKWHKASS) are extracellular. Asparagine 162 is a glycosylation site (N-linked (GlcNAc...) asparagine). Residues 188 to 208 (YIFVGIFWIVFLSLIIFYTAI) traverse the membrane as a helical segment. Over 209–233 (TKKIFKSHFKSRKNSVSVKKKSSRN) the chain is Cytoplasmic. Residues 234–254 (IFSIMFVFFICFVPYHIARIP) form a helical membrane-spanning segment. At 255-277 (YTQSQTEAHYSCQSKQILFYVKE) the chain is on the extracellular side. The helical transmembrane segment at 278–298 (FSLLLSAANVCLDPIIYFFLC) threads the bilayer. Residues 299–337 (QPFREVLCKKLHIQLKTQHDSETSKIKRENIIQESTDTL) lie on the Cytoplasmic side of the membrane.

This sequence belongs to the G-protein coupled receptor 1 family.

It is found in the cell membrane. Receptor for UDP-glucose and other UDP-sugar coupled to G-proteins. Not activated by ATP, ADP, UTP or ATP. The protein is P2Y purinoceptor 14 (P2RY14) of Bos taurus (Bovine).